A 614-amino-acid chain; its full sequence is Pyruvate decarboxylase 2 (614 aa).

Positions 50 and 137 each coordinate substrate. Residues 415-523 (DSWFNCQKLK…FLINNGGYTI (109 aa)) are thiamine pyrophosphate binding. Residues Asp-491, Asn-518, and Gly-520 each contribute to the Mg(2+) site. Glu-524 is a binding site for substrate.

It belongs to the TPP enzyme family. As to quaternary structure, homotetramer. A metal cation serves as cofactor. Requires thiamine diphosphate as cofactor. Pollen.

It catalyses the reaction a 2-oxocarboxylate + H(+) = an aldehyde + CO2. This Nicotiana tabacum (Common tobacco) protein is Pyruvate decarboxylase 2 (PDC2).